The sequence spans 58 residues: Potassium channel toxin alpha-KTx 1.6 (58 aa).

A signal peptide spans 1-21 (MKISFLLLLAIVICSIGWTEA). Glutamine 22 is modified (pyrrolidone carboxylic acid). Cystine bridges form between cysteine 28–cysteine 49, cysteine 34–cysteine 54, and cysteine 38–cysteine 56.

This sequence belongs to the short scorpion toxin superfamily. Potassium channel inhibitor family. Alpha-KTx 01 subfamily. Expressed by the venom gland.

The protein localises to the secreted. Its function is as follows. Potent blocker of both large-conductance calcium-activated potassium channels (KCa1.1/KCNMA1) and voltage-gated potassium channels (Kv1.3/KCNA3 and ERG1/Kv11.1/KCNH2). This chain is Potassium channel toxin alpha-KTx 1.6, found in Olivierus martensii (Manchurian scorpion).